Here is a 306-residue protein sequence, read N- to C-terminus: Protein YIPF1 (306 aa).

Residues 1–119 (MAAVDDLQFE…VRLYIRSNPD (119 aa)) lie on the Cytoplasmic side of the membrane. Residues 33 to 59 (PSVSFKHQPRPPGSLGREEDEELLGTN) are disordered. Positions 50 to 59 (EEDEELLGTN) are enriched in acidic residues. The chain crosses the membrane as a helical span at residues 120–140 (LYGPFWICATLVFAIAISGNL). Over 141 to 162 (SNFLIHLGEKTYHYVPEFQKVS) the chain is Lumenal. Residues 163 to 183 (IAATVIYAYAWLVPLALWGFL) traverse the membrane as a helical segment. Residues 184–200 (LWRNSKVMNIVSYSFLE) are Cytoplasmic-facing. The helical transmembrane segment at 201–221 (IVCVYGYSLFIYIPTAVLWII) threads the bilayer. The Lumenal portion of the chain corresponds to 222-227 (PQRVIR). A helical transmembrane segment spans residues 228–248 (WVLVTIALGISGSVLAMTFWP). The Cytoplasmic portion of the chain corresponds to 249–256 (AVREDNRR). A helical membrane pass occupies residues 257–277 (VALATIVTIMLLHVLLSVGCL). Topologically, residues 278-306 (AYFFDAPEMDHLPAAITTPNQTVAAAKSS) are lumenal. The N-linked (GlcNAc...) asparagine glycan is linked to asparagine 297.

Belongs to the YIP1 family. As to quaternary structure, interacts with YIPF6; this interaction may stabilize YIPF1. May also form a ternary complex with YIPF2 and YIPF6.

It localises to the golgi apparatus. It is found in the cis-Golgi network membrane. The protein localises to the trans-Golgi network membrane. The protein resides in the late endosome membrane. This chain is Protein YIPF1 (Yipf1), found in Rattus norvegicus (Rat).